The primary structure comprises 74 residues: Auswaprin-a (74 aa).

A signal peptide spans 1-24 (MSSGGLLLLLGLLTLWGVLTPVSS). Residues 27 to 71 (RPKKPGLCPPRPQKPCVKECKNDWSCSGQQKCCNYGCIDECRDPI) enclose the WAP domain. Intrachain disulfides connect C34–C59, C42–C63, C46–C58, and C52–C67.

The protein belongs to the venom waprin family. As to expression, expressed by the venom gland.

The protein resides in the secreted. Damages membranes of susceptible bacteria. Has no hemolytic activity. Not toxic to mice. Does not inhibit the proteinases elastase and cathepsin G. This Pseudechis australis (Mulga snake) protein is Auswaprin-a.